The following is a 406-amino-acid chain: Tryptophan synthase beta chain (406 aa).

The residue at position 95 (K95) is an N6-(pyridoxal phosphate)lysine.

It belongs to the TrpB family. As to quaternary structure, tetramer of two alpha and two beta chains. It depends on pyridoxal 5'-phosphate as a cofactor.

It catalyses the reaction (1S,2R)-1-C-(indol-3-yl)glycerol 3-phosphate + L-serine = D-glyceraldehyde 3-phosphate + L-tryptophan + H2O. The protein operates within amino-acid biosynthesis; L-tryptophan biosynthesis; L-tryptophan from chorismate: step 5/5. Functionally, the beta subunit is responsible for the synthesis of L-tryptophan from indole and L-serine. This Pseudomonas fluorescens (strain ATCC BAA-477 / NRRL B-23932 / Pf-5) protein is Tryptophan synthase beta chain.